The primary structure comprises 296 residues: Formylmethanofuran--tetrahydromethanopterin formyltransferase-like protein (296 aa).

Belongs to the FTR family.

In Methanothermobacter marburgensis (strain ATCC BAA-927 / DSM 2133 / JCM 14651 / NBRC 100331 / OCM 82 / Marburg) (Methanobacterium thermoautotrophicum), this protein is Formylmethanofuran--tetrahydromethanopterin formyltransferase-like protein (ehaS).